A 180-amino-acid polypeptide reads, in one-letter code: Iron sulfur cluster assembly protein 1, mitochondrial (180 aa).

Belongs to the NifU family. As to quaternary structure, component of the core Fe-S cluster (ISC) assembly machinery. The cofactor is [2Fe-2S] cluster.

The protein localises to the mitochondrion matrix. It functions in the pathway cofactor biosynthesis; iron-sulfur cluster biosynthesis. Scaffold protein for the de novo synthesis of iron-sulfur (Fe-S) clusters within mitochondria, which is required for maturation of both mitochondrial and cytoplasmic [2Fe-2S] and [4Fe-4S] proteins. First, a [2Fe-2S] cluster is transiently assembled on the scaffold protein ISU1. In a second step, the cluster is released from ISU1, transferred to a glutaredoxin, followed by the formation of mitochondrial [2Fe-2S] proteins, the synthesis of [4Fe-4S] clusters and their target-specific insertion into the recipient apoproteins. Cluster assembly on ISU1 depends on the function of the cysteine desulfurase complex NFS1-ISD11, which serves as the sulfur donor for cluster synthesis, the iron-binding protein frataxin as the putative iron donor, and the electron transfer chain comprised of ferredoxin reductase and ferredoxin, which receive their electrons from NADH. The sequence is that of Iron sulfur cluster assembly protein 1, mitochondrial (ISU1) from Kluyveromyces lactis (strain ATCC 8585 / CBS 2359 / DSM 70799 / NBRC 1267 / NRRL Y-1140 / WM37) (Yeast).